The sequence spans 279 residues: Urease accessory protein UreD (279 aa).

It belongs to the UreD family. UreD, UreF and UreG form a complex that acts as a GTP-hydrolysis-dependent molecular chaperone, activating the urease apoprotein by helping to assemble the nickel containing metallocenter of UreC. The UreE protein probably delivers the nickel.

The protein resides in the cytoplasm. Functionally, required for maturation of urease via the functional incorporation of the urease nickel metallocenter. The sequence is that of Urease accessory protein UreD from Streptococcus thermophilus (strain ATCC BAA-250 / LMG 18311).